The primary structure comprises 262 residues: Probable esterase azaC (262 aa).

Residues S119, D188, and H216 each act as charge relay system in the active site.

It belongs to the LovG family.

It participates in secondary metabolite biosynthesis. In terms of biological role, probable esterase; part of the gene cluster that mediates the biosynthesis of azaphilones, a class of fungal metabolites characterized by a highly oxygenated pyrano-quinone bicyclic core and exhibiting a broad range of bioactivities. In the first step, the non-reducing polyketide synthase azaA forms the hexaketide precursor from successive condensations of five malonyl-CoA units, presumably with a simple acetyl-CoA starter unit. The reactive polyketide chain then undergoes a PT-mediated C2-C7 cyclization to afford the aromatic ring and is eventually released as an aldehyde through the R-domain. The putative ketoreductase azaE is proposed to catalyze the reduction of the terminal ketone resulting in the early culture product FK17-P2a. The monooxygenase azaH was demonstrated to be the only enzyme required to convert FK17-P2a to azanigerone E. AzaH first hydroxylates the benzaldehyde intermediate FK17-P2a at C4, which triggers the formation of the pyran-ring to afford azanigerone E. In parallel, the 2,4-dimethylhexanoyl chain is synthesized by the HR-PKS azaB and is proposed to be transferred to the C4-hydroxyl of azanigerone E by the acyltransferase azaD directly from the ACP domain of azaB. Alternatively, the 2,4-dimethyl-hexanoyl chain may be offloaded from the HR-PKS as a carboxylic acid and converted to an acyl-CoA by azaF. The resulting acyl-CoA molecule could then be taken up as a substrate by AzaD to form azanigerone B. To yield the carboxylic acid substituent in azanigerone A, the hydroxypropyl side chain of azanigerone B would need to undergo a C-C oxidative cleavage catalyzed by cytochrome P450 AzaI. AzaI is proposed to act on a vicinal diol that leads to a C-C bond scission either through an alkoxyradical intermediate or a peroxy complex. In the biosynthesis of azanigerone A, azanigerone B first undergoes hydroxylation at C10, possibly catalyzed by one of the two FAD-dependent monooxygenases encoded in the cluster, azaG or azaL, resulting in the vicinal diol azanigerone C. Oxidative cleavage of azanigerone C by azaI would yield the corresponding aldehyde derivative of azanigerone A. Finally, the dehydrogenase azaJ is proposed to convert the aldehyde functional group into the carboxylic acid, completing the conversion from azanigerone B to azanigerone A. Alternatively, the oxidation of aldehyde to carboxylic acid may be catalyzed by the same P450 enzyme azaI via consecutive oxidation or by endogenous alcohol dehydrogenase. This Aspergillus niger (strain ATCC 1015 / CBS 113.46 / FGSC A1144 / LSHB Ac4 / NCTC 3858a / NRRL 328 / USDA 3528.7) protein is Probable esterase azaC.